A 396-amino-acid polypeptide reads, in one-letter code: Probable glucan endo-1,6-beta-glucosidase B (396 aa).

A signal peptide spans 1 to 17 (MIRRLAAFSALSGLATA). A glycan (N-linked (GlcNAc...) asparagine) is linked at asparagine 30. The Proton donor role is filled by glutamate 219. N-linked (GlcNAc...) asparagine glycosylation is present at asparagine 272. Residue glutamate 320 is the Nucleophile of the active site.

This sequence belongs to the glycosyl hydrolase 5 (cellulase A) family.

The protein resides in the secreted. It carries out the reaction Random hydrolysis of (1-&gt;6)-linkages in (1-&gt;6)-beta-D-glucans.. Functionally, beta-glucanases participate in the metabolism of beta-glucan, the main structural component of the cell wall. Acts on lutean, pustulan and 1,6-oligo-beta-D-glucosides. The chain is Probable glucan endo-1,6-beta-glucosidase B (exgB) from Aspergillus fumigatus (strain CBS 144.89 / FGSC A1163 / CEA10) (Neosartorya fumigata).